The primary structure comprises 314 residues: Probable tRNA pseudouridine synthase B (314 aa).

Residues 1 to 10 (MATRGRHRSR) show a composition bias toward basic residues. The tract at residues 1 to 30 (MATRGRHRSRTSGTSSEPMTLRAPPDERDL) is disordered. Asp-72 serves as the catalytic Nucleophile. Residues 237-314 (LPRVTIAPSA…LVVELDRMLV (78 aa)) form the PUA domain.

Belongs to the pseudouridine synthase TruB family. Type 2 subfamily.

It catalyses the reaction uridine(55) in tRNA = pseudouridine(55) in tRNA. In terms of biological role, could be responsible for synthesis of pseudouridine from uracil-55 in the psi GC loop of transfer RNAs. The polypeptide is Probable tRNA pseudouridine synthase B (Haloarcula marismortui (strain ATCC 43049 / DSM 3752 / JCM 8966 / VKM B-1809) (Halobacterium marismortui)).